Here is a 616-residue protein sequence, read N- to C-terminus: Proline dehydrogenase 1, mitochondrial (616 aa).

The protein belongs to the proline oxidase family. Requires FAD as cofactor.

Its subcellular location is the mitochondrion matrix. The catalysed reaction is L-proline + a quinone = (S)-1-pyrroline-5-carboxylate + a quinol + H(+). It functions in the pathway amino-acid degradation; L-proline degradation into L-glutamate; L-glutamate from L-proline: step 1/2. In terms of biological role, converts proline to delta-1-pyrroline-5-carboxylate. Through proline catabolism, promotes reactive oxygen species (ROS) production and the transcription of skn-1 target genes in response to bacterial infection by P.aeruginosa. The polypeptide is Proline dehydrogenase 1, mitochondrial (Caenorhabditis elegans).